A 1099-amino-acid chain; its full sequence is Carbamoyl phosphate synthase large chain (1099 aa).

Positions 1–402 (MPKRTDLKSV…ALQKALRSLE (402 aa)) are carboxyphosphate synthetic domain. The ATP site is built by Arg129, Arg169, Gly175, Gly176, Glu208, Ile210, Glu215, Gly241, Val242, His243, Gln285, and Glu299. An ATP-grasp 1 domain is found at 133–328 (KGVVERCGAE…IAKIATKLSL (196 aa)). Mg(2+) contacts are provided by Gln285, Glu299, and Asn301. The Mn(2+) site is built by Gln285, Glu299, and Asn301. An oligomerization domain region spans residues 403–546 (QKGSQLDFSH…YHYSSYDEED (144 aa)). The interval 547–950 (EVALHSKPSI…AFAKSQAAAN (404 aa)) is carbamoyl phosphate synthetic domain. Residues 677–868 (SRVLDEAGLI…MAKAAALIGT (192 aa)) enclose the ATP-grasp 2 domain. ATP is bound by residues Arg713, Arg752, Leu754, Glu759, Gly784, Ile785, His786, Ser787, Gln827, and Glu839. 3 residues coordinate Mg(2+): Gln827, Glu839, and Asn841. Gln827, Glu839, and Asn841 together coordinate Mn(2+). In terms of domain architecture, MGS-like spans 951-1099 (NALPTEGKIF…AENLKALQNG (149 aa)). The tract at residues 951 to 1099 (NALPTEGKIF…AENLKALQNG (149 aa)) is allosteric domain.

This sequence belongs to the CarB family. Composed of two chains; the small (or glutamine) chain promotes the hydrolysis of glutamine to ammonia, which is used by the large (or ammonia) chain to synthesize carbamoyl phosphate. Tetramer of heterodimers (alpha,beta)4. The cofactor is Mg(2+). Requires Mn(2+) as cofactor.

It carries out the reaction hydrogencarbonate + L-glutamine + 2 ATP + H2O = carbamoyl phosphate + L-glutamate + 2 ADP + phosphate + 2 H(+). The catalysed reaction is hydrogencarbonate + NH4(+) + 2 ATP = carbamoyl phosphate + 2 ADP + phosphate + 2 H(+). Its pathway is amino-acid biosynthesis; L-arginine biosynthesis; carbamoyl phosphate from bicarbonate: step 1/1. It participates in pyrimidine metabolism; UMP biosynthesis via de novo pathway; (S)-dihydroorotate from bicarbonate: step 1/3. Functionally, large subunit of the glutamine-dependent carbamoyl phosphate synthetase (CPSase). CPSase catalyzes the formation of carbamoyl phosphate from the ammonia moiety of glutamine, carbonate, and phosphate donated by ATP, constituting the first step of 2 biosynthetic pathways, one leading to arginine and/or urea and the other to pyrimidine nucleotides. The large subunit (synthetase) binds the substrates ammonia (free or transferred from glutamine from the small subunit), hydrogencarbonate and ATP and carries out an ATP-coupled ligase reaction, activating hydrogencarbonate by forming carboxy phosphate which reacts with ammonia to form carbamoyl phosphate. The sequence is that of Carbamoyl phosphate synthase large chain from Arthrobacter sp. (strain FB24).